Reading from the N-terminus, the 397-residue chain is F-box protein At3g28330 (397 aa).

The 51-residue stretch at 6–56 folds into the F-box domain; that stretch reads KKDMDFLTEDLWEIILARLPLKSIITTPKLVCKVWKSIIESRCFRDLFQSL.

In Arabidopsis thaliana (Mouse-ear cress), this protein is F-box protein At3g28330.